Here is a 403-residue protein sequence, read N- to C-terminus: S-adenosylmethionine synthase (403 aa).

His15 contributes to the ATP binding site. Asp17 provides a ligand contact to Mg(2+). Glu43 is a binding site for K(+). The L-methionine site is built by Glu56 and Gln99. The interval 99-109 (QSPDINQGVDR) is flexible loop. ATP contacts are provided by residues 166 to 168 (DAK), 232 to 233 (KF), Asp241, 247 to 248 (RK), Ala264, and Lys268. Asp241 is a binding site for L-methionine. Lys272 lines the L-methionine pocket.

This sequence belongs to the AdoMet synthase family. In terms of assembly, homotetramer; dimer of dimers. The cofactor is Mg(2+). It depends on K(+) as a cofactor.

It is found in the cytoplasm. The catalysed reaction is L-methionine + ATP + H2O = S-adenosyl-L-methionine + phosphate + diphosphate. It participates in amino-acid biosynthesis; S-adenosyl-L-methionine biosynthesis; S-adenosyl-L-methionine from L-methionine: step 1/1. In terms of biological role, catalyzes the formation of S-adenosylmethionine (AdoMet) from methionine and ATP. The overall synthetic reaction is composed of two sequential steps, AdoMet formation and the subsequent tripolyphosphate hydrolysis which occurs prior to release of AdoMet from the enzyme. The polypeptide is S-adenosylmethionine synthase (Xanthomonas axonopodis pv. citri (strain 306)).